A 300-amino-acid polypeptide reads, in one-letter code: tRNA dimethylallyltransferase 2 (300 aa).

Position 13–20 (13–20 (GPTGVGKT)) interacts with ATP. Position 15–20 (15–20 (TGVGKT)) interacts with substrate. The interval 38-41 (DSRQ) is interaction with substrate tRNA.

It belongs to the IPP transferase family. Monomer. Mg(2+) is required as a cofactor.

The catalysed reaction is adenosine(37) in tRNA + dimethylallyl diphosphate = N(6)-dimethylallyladenosine(37) in tRNA + diphosphate. In terms of biological role, catalyzes the transfer of a dimethylallyl group onto the adenine at position 37 in tRNAs that read codons beginning with uridine, leading to the formation of N6-(dimethylallyl)adenosine (i(6)A). This chain is tRNA dimethylallyltransferase 2, found in Porphyromonas gingivalis (strain ATCC 33277 / DSM 20709 / CIP 103683 / JCM 12257 / NCTC 11834 / 2561).